A 344-amino-acid polypeptide reads, in one-letter code: Holliday junction branch migration complex subunit RuvB (344 aa).

A compositionally biased stretch (basic and acidic residues) spans 1–25 (MTDSDPTLRPDRLPEDVQATDDRAL). Positions 1 to 33 (MTDSDPTLRPDRLPEDVQATDDRALRPQSLDDF) are disordered. The large ATPase domain (RuvB-L) stretch occupies residues 1 to 186 (MTDSDPTLRP…FGIPTRLNFY (186 aa)). ATP-binding positions include Leu25, Arg26, Gly67, Lys70, Thr71, Thr72, 133–135 (EDF), Arg176, Tyr186, and Arg223. Thr71 contacts Mg(2+). The segment at 187–257 (TIAELDQIVA…IADSALTRLG (71 aa)) is small ATPAse domain (RuvB-S). The tract at residues 260–344 (DLGLDGADRR…PKRPDQGELI (85 aa)) is head domain (RuvB-H). Residues Arg296, Arg315, and Arg320 each coordinate DNA.

It belongs to the RuvB family. In terms of assembly, homohexamer. Forms an RuvA(8)-RuvB(12)-Holliday junction (HJ) complex. HJ DNA is sandwiched between 2 RuvA tetramers; dsDNA enters through RuvA and exits via RuvB. An RuvB hexamer assembles on each DNA strand where it exits the tetramer. Each RuvB hexamer is contacted by two RuvA subunits (via domain III) on 2 adjacent RuvB subunits; this complex drives branch migration. In the full resolvosome a probable DNA-RuvA(4)-RuvB(12)-RuvC(2) complex forms which resolves the HJ.

It is found in the cytoplasm. It catalyses the reaction ATP + H2O = ADP + phosphate + H(+). Its function is as follows. The RuvA-RuvB-RuvC complex processes Holliday junction (HJ) DNA during genetic recombination and DNA repair, while the RuvA-RuvB complex plays an important role in the rescue of blocked DNA replication forks via replication fork reversal (RFR). RuvA specifically binds to HJ cruciform DNA, conferring on it an open structure. The RuvB hexamer acts as an ATP-dependent pump, pulling dsDNA into and through the RuvAB complex. RuvB forms 2 homohexamers on either side of HJ DNA bound by 1 or 2 RuvA tetramers; 4 subunits per hexamer contact DNA at a time. Coordinated motions by a converter formed by DNA-disengaged RuvB subunits stimulates ATP hydrolysis and nucleotide exchange. Immobilization of the converter enables RuvB to convert the ATP-contained energy into a lever motion, pulling 2 nucleotides of DNA out of the RuvA tetramer per ATP hydrolyzed, thus driving DNA branch migration. The RuvB motors rotate together with the DNA substrate, which together with the progressing nucleotide cycle form the mechanistic basis for DNA recombination by continuous HJ branch migration. Branch migration allows RuvC to scan DNA until it finds its consensus sequence, where it cleaves and resolves cruciform DNA. This is Holliday junction branch migration complex subunit RuvB from Jannaschia sp. (strain CCS1).